The chain runs to 242 residues: 3-deoxy-manno-octulosonate cytidylyltransferase (242 aa).

The protein belongs to the KdsB family.

The protein resides in the cytoplasm. It catalyses the reaction 3-deoxy-alpha-D-manno-oct-2-ulosonate + CTP = CMP-3-deoxy-beta-D-manno-octulosonate + diphosphate. The protein operates within nucleotide-sugar biosynthesis; CMP-3-deoxy-D-manno-octulosonate biosynthesis; CMP-3-deoxy-D-manno-octulosonate from 3-deoxy-D-manno-octulosonate and CTP: step 1/1. It participates in bacterial outer membrane biogenesis; lipopolysaccharide biosynthesis. In terms of biological role, activates KDO (a required 8-carbon sugar) for incorporation into bacterial lipopolysaccharide in Gram-negative bacteria. The sequence is that of 3-deoxy-manno-octulosonate cytidylyltransferase from Anaeromyxobacter sp. (strain K).